The following is a 251-amino-acid chain: Imidazole glycerol phosphate synthase subunit HisF (251 aa).

Catalysis depends on residues D11 and D130.

Belongs to the HisA/HisF family. In terms of assembly, heterodimer of HisH and HisF.

Its subcellular location is the cytoplasm. The catalysed reaction is 5-[(5-phospho-1-deoxy-D-ribulos-1-ylimino)methylamino]-1-(5-phospho-beta-D-ribosyl)imidazole-4-carboxamide + L-glutamine = D-erythro-1-(imidazol-4-yl)glycerol 3-phosphate + 5-amino-1-(5-phospho-beta-D-ribosyl)imidazole-4-carboxamide + L-glutamate + H(+). Its pathway is amino-acid biosynthesis; L-histidine biosynthesis; L-histidine from 5-phospho-alpha-D-ribose 1-diphosphate: step 5/9. Its function is as follows. IGPS catalyzes the conversion of PRFAR and glutamine to IGP, AICAR and glutamate. The HisF subunit catalyzes the cyclization activity that produces IGP and AICAR from PRFAR using the ammonia provided by the HisH subunit. The polypeptide is Imidazole glycerol phosphate synthase subunit HisF (Natranaerobius thermophilus (strain ATCC BAA-1301 / DSM 18059 / JW/NM-WN-LF)).